The primary structure comprises 3419 residues: Utrophin (3419 aa).

The tract at residues 1-246 is actin-binding; it reads MAKYGHLEAS…LPDKKSIIMY (246 aa). Position 4 is a phosphotyrosine (tyrosine 4). Serine 10 bears the Phosphoserine mark. Calponin-homology (CH) domains lie at 31-135 and 150-255; these read DVQK…LHWQ and TNSE…EVLP. Positions 268 to 905 are interaction with SYNM; sequence TLPRKYKKEC…YQQQLENELK (638 aa). Phosphoserine is present on serine 295. Spectrin repeat units lie at residues 312 to 416, 421 to 525, 532 to 636, 690 to 795, 801 to 901, 910 to 1012, 1019 to 1121, 1128 to 1229, 1236 to 1333, 1335 to 1436, 1438 to 1540, 1547 to 1648, 1653 to 1747, 1748 to 1840, 1841 to 1958, 1969 to 2070, and 2077 to 2176; these read DSYQ…SRLH, ELQK…NRLQ, QELL…NQVT, KKFD…RKIQ, NAYF…QQLE, PAYL…RSLE, RDFK…SRLS, MNLK…HTLE, VELL…ISLE, QLQV…LFQK, ANFE…QDLE, RKLK…NTLL, QLEV…INSA, QMLI…KIKA, IPQR…SDRR, KQFH…PRLK, and SGYR…KTRT. Positions 1336–1761 are interaction with SYNM; it reads LQVLRETDHM…GQDPAGTVEA (426 aa). At serine 1998 the chain carries Phosphoserine. A Phosphoserine modification is found at serine 2201. Spectrin repeat units lie at residues 2216–2319, 2336–2426, 2433–2542, 2549–2674, and 2681–2783; these read ADLD…QQLE, EELM…SALE, QTSR…AHLE, NRLL…KQVG, and RDLQ…KQLQ. The disordered stretch occupies residues 2616–2640; it reads DQPIEAPEEPRRNPQSKTELTPEER. The tract at residues 2785–3152 is interaction with SYNM; it reads AHRDFGPSSQ…TVLEGDNLET (368 aa). The 34-residue stretch at 2799 to 2832 folds into the WW domain; sequence TSVQLPWQRSISHNKVPYYINHQTQTTCWDHPKM. The ZZ-type; degenerate zinc-finger motif lies at 3052 to 3108; it reads KHQAKCNICKECPIVGFRYRSLKHFNYDVCQSCFFSGRTAKGHKLHYPMVEYCIPTT. Cysteine 3057, cysteine 3060, cysteine 3081, and cysteine 3084 together coordinate Zn(2+). 2 disordered regions span residues 3277–3296 and 3344–3395; these read RRGL…YHTS and DSDS…TDLT. Position 3284 is a phosphoserine (serine 3284).

In terms of assembly, homodimer. Interacts with the syntrophins SNTA1; SNTB1 and SNTB2. Interacts with SYNM. Interacts (via its WWW and ZZ domains) with DAG1 (via the PPXY motif of betaDAG1); the interaction is inhibited by the tyrosine phosphorylation of the PPXY motif of DAG1. Interacts with DTNB. Interacts with PGM5.

Its subcellular location is the postsynaptic cell membrane. The protein localises to the cytoplasm. It localises to the cytoskeleton. In terms of biological role, may play a role in anchoring the cytoskeleton to the plasma membrane. This is Utrophin from Rattus norvegicus (Rat).